A 681-amino-acid chain; its full sequence is Proton channel OTOP3 (681 aa).

The segment covering 1–25 (MLSKEEPACRQFHSREKTWGNEHNG) has biased composition (basic and acidic residues). The tract at residues 1 to 26 (MLSKEEPACRQFHSREKTWGNEHNGK) is disordered. Over 1–112 (MLSKEEPACR…LHQRAKKTGR (112 aa)) the chain is Cytoplasmic. A helical membrane pass occupies residues 113 to 133 (LFSGLFGLNLMFLGGTVVSSV). Residues 134-143 (ALSNKAVPER) lie on the Extracellular side of the membrane. A helical membrane pass occupies residues 144 to 166 (DSQSFLCILMLLSSVWALYHLLF). At 167-182 (IRNQNGAVHHDHHAGA) the chain is on the cytoplasmic side. The chain crosses the membrane as a helical span at residues 183–204 (MWLKASLAIFGVCSIILSIFEI). Over 205 to 216 (GHALLLQNCEIL) the chain is Extracellular. Residues 217-240 (MDIVFFSIEIVFVSVQTVLLWVSC) traverse the membrane as a helical segment. Topologically, residues 241 to 248 (KDCVQMHH) are cytoplasmic. A helical membrane pass occupies residues 249–271 (SVTRYGIMLTLATDILLWLTAVI). Residues 272-317 (DDSLEQDLEILQSNSTQDESNEMAQCQCPTDSMCWGLKQGYVTMFP) are Extracellular-facing. A helical transmembrane segment spans residues 318–334 (FNIEYSLICATLLFIMW). Residues 335-358 (KNVGRREKLHSDPPRHTFQLRGII) lie on the Cytoplasmic side of the membrane. The chain crosses the membrane as a helical span at residues 359–378 (YGPLIGGAALLVGISVFVQY). The Extracellular segment spans residues 379–392 (QVEATSGMVSILSY). The chain crosses the membrane as a helical span at residues 393–415 (HMYYGYKMIILAPMIVCSVAGII). The Cytoplasmic segment spans residues 416–507 (AHSLREKEKK…QGKMKNYTRK (92 aa)). A helical transmembrane segment spans residues 508 to 529 (LDVTLLFVSAVGQLGISYFSII). Topologically, residues 530–540 (ATVVTTPWTML) are extracellular. The helical transmembrane segment at 541–563 (SALNFSNSLLLILQYLSQTMFII) threads the bilayer. The Cytoplasmic segment spans residues 564-614 (ESMRSIHEEEKEKPGHHEESHRRMSVQEMHKAPPSCLDAGHLGLSRRVVKE). A helical transmembrane segment spans residues 615-632 (MAMFLMICNIMCWILGAF). Over 633–651 (GAHPLYMNGLERQLYGSGI) the chain is Extracellular. The chain crosses the membrane as a helical span at residues 652-674 (WLAILNIGLPLSVFYRMHSVGIL). The Cytoplasmic segment spans residues 675 to 681 (LEVYLHA).

Belongs to the otopetrin family. As to quaternary structure, homodimer.

The protein localises to the cell membrane. It carries out the reaction H(+)(in) = H(+)(out). PH regulates the proton channel activity from both sides of the plasma membrane. Low pH activates the channel from the extracellular side but inactivates the channel on the intracellular side. Zn(2+) and Ca(2+) can partially block the channel. In terms of biological role, proton-selective channel gated by extracellular protons. The sequence is that of Proton channel OTOP3 (otop3) from Xenopus tropicalis (Western clawed frog).